The following is a 541-amino-acid chain: RING finger protein 37 (541 aa).

Positions 258–338 (DVPEEFLDPI…DHFLLQHSIP (81 aa)) constitute a U-box domain. Position 451 is an asymmetric dimethylarginine (arginine 451). An RING-type zinc finger spans residues 483 to 528 (CASCKRVFSPYFKKEPVYQLPCGHLLCRPCLGEKQRSLPMTCTACQ).

In terms of assembly, interacts with UBE2L3. Interacts with VCP. As to expression, expressed in liver, heart, brain, kidney and testis.

The protein localises to the nucleus. The enzyme catalyses S-ubiquitinyl-[E2 ubiquitin-conjugating enzyme]-L-cysteine + [acceptor protein]-L-lysine = [E2 ubiquitin-conjugating enzyme]-L-cysteine + N(6)-ubiquitinyl-[acceptor protein]-L-lysine.. Its pathway is protein modification; protein ubiquitination. Functionally, may have a ubiquitin-protein ligase activity acting as an E3 ubiquitin-protein ligase or as a ubiquitin-ubiquitin ligase promoting elongation of ubiquitin chains on substrates. The sequence is that of RING finger protein 37 from Homo sapiens (Human).